The primary structure comprises 404 residues: Pre-heme d1 synthase (404 aa).

Positions 22-235 (GTPKPVVIWN…LIARALESAE (214 aa)) constitute a Radical SAM core domain. [4Fe-4S] cluster is bound by residues Cys-36, Cys-40, Cys-43, Cys-340, Cys-343, Cys-349, and Cys-371.

The protein belongs to the radical SAM superfamily. [4Fe-4S] cluster is required as a cofactor.

It participates in porphyrin-containing compound metabolism. Involved in heme d1 biosynthesis. Radical SAM enzyme that catalyzes the removal of two propionate side chains from the intermediate 12,18-didecarboxysiroheme (DDSH) and may introduce the keto functions on rings A and B, yielding the heme d1 precursor dihydro-heme d1. This chain is Pre-heme d1 synthase, found in Dinoroseobacter shibae (strain DSM 16493 / NCIMB 14021 / DFL 12).